Consider the following 356-residue polypeptide: Cell division control protein 10 (356 aa).

Residues 36–286 (KGFELNVLVV…NNYRKKIFEI (251 aa)) form the Septin-type G domain. The tract at residues 46-53 (GRRGLGTS) is G1 motif. Residues 46 to 53 (GRRGLGTS) and threonine 70 each bind GTP. The G3 motif stretch occupies residues 93–96 (TYHE). Residues 163–166 (PKAD) are G4 motif. Residues 164 to 172 (KADMYTPDE) and arginine 235 each bind GTP.

It belongs to the TRAFAC class TrmE-Era-EngA-EngB-Septin-like GTPase superfamily. Septin GTPase family. As to quaternary structure, component of the septin complex.

Functionally, septins are GTPases involved in cytokinesis. The septins localize to the site of cleavage and act as a structural scaffold that recruits different components involved in diverse processes at specific stages during the cell cycle. Septins are also involved in cell morphogenesis, chitin deposition, cell cycle regulation, cell compartmentalization and spore wall formation. The chain is Cell division control protein 10 (CDC10) from Encephalitozoon cuniculi (strain GB-M1) (Microsporidian parasite).